The sequence spans 370 residues: Anhydro-N-acetylmuramic acid kinase (370 aa).

Residue 12–19 (GTSLDGVD) participates in ATP binding.

The protein belongs to the anhydro-N-acetylmuramic acid kinase family.

The enzyme catalyses 1,6-anhydro-N-acetyl-beta-muramate + ATP + H2O = N-acetyl-D-muramate 6-phosphate + ADP + H(+). The protein operates within amino-sugar metabolism; 1,6-anhydro-N-acetylmuramate degradation. It participates in cell wall biogenesis; peptidoglycan recycling. Catalyzes the specific phosphorylation of 1,6-anhydro-N-acetylmuramic acid (anhMurNAc) with the simultaneous cleavage of the 1,6-anhydro ring, generating MurNAc-6-P. Is required for the utilization of anhMurNAc either imported from the medium or derived from its own cell wall murein, and thus plays a role in cell wall recycling. The sequence is that of Anhydro-N-acetylmuramic acid kinase from Pectobacterium carotovorum subsp. carotovorum (strain PC1).